Consider the following 1037-residue polypeptide: Guanine nucleotide-binding protein G(s) subunit alpha isoforms XLas (1037 aa).

4 disordered regions span residues 1–105 (MGVR…MPFE), 185–224 (APGG…EETM), 283–588 (SPSQ…TSGC), and 640–666 (PLAE…KKRS). The segment covering 33 to 46 (APGAAAPGAGPSPA) has biased composition (low complexity). Basic and acidic residues predominate over residues 343–354 (PDKRERAERPPV). 2 stretches are compositionally biased toward low complexity: residues 361–408 (MEGA…GATP) and 416–521 (APAD…PASG). The span at 553-565 (GKSESSRGRRVYY) shows a compositional bias: basic and acidic residues. The span at 572–583 (SDDDSSGDESDD) shows a compositional bias: acidic residues. Residues 640 to 660 (PLAEKRRQMRKEALEKRAQKR) show a composition bias toward basic and acidic residues. The stretch at 641–667 (LAEKRRQMRKEALEKRAQKRAEKKRSK) forms a coiled coil. Positions 682 to 1037 (CTHRLLLLGA…RMHLRQYELL (356 aa)) constitute a G-alpha domain. The G1 motif stretch occupies residues 685-698 (RLLLLGAGESGKST). Residue 690 to 698 (GAGESGKST) participates in GTP binding. Ser697 lines the Mg(2+) pocket. Residues 711 to 734 (FNGEGGEEDPQAARSNSDGEKATK) form a disordered region. Residues 730 to 756 (EKATKVQDIKNNLKEAIETIVAAMSNL) are a coiled coil. The interval 839–847 (DLLRCRVLT) is G2 motif. GTP is bound by residues 840 to 847 (LLRCRVLT), 866 to 870 (DVGGQ), and 935 to 938 (NKQD). Arg844 is modified (ADP-ribosylarginine; by cholera toxin). Thr847 provides a ligand contact to Mg(2+). Residues 862–871 (FHMFDVGGQR) form a G3 motif region. Residues 931-938 (ILFLNKQD) are G4 motif. Ser995 is modified (phosphoserine). Residues 1007-1012 (TCAVDT) are G5 motif. GTP is bound at residue Ala1009.

It belongs to the G-alpha family. G(s) subfamily. As to quaternary structure, g proteins are composed of 3 units; alpha, beta and gamma. The alpha chain contains the guanine nucleotide binding site. Interacts through its N-terminal region with ALEX which is produced from the same locus in a different open reading frame. This interaction may inhibit its adenylyl cyclase-stimulating activity. Interacts with MAGED2.

The protein resides in the cell membrane. The protein localises to the apical cell membrane. It catalyses the reaction GTP + H2O = GDP + phosphate + H(+). Its function is as follows. Guanine nucleotide-binding proteins (G proteins) function as transducers in numerous signaling pathways controlled by G protein-coupled receptors (GPCRs). The alpha chain contains the guanine nucleotide binding site and alternates between an active, GTP-bound state and an inactive, GDP-bound state. Signaling by an activated GPCR promotes GDP release and GTP binding. The alpha subunit has a low GTPase activity that converts bound GTP to GDP, thereby terminating the signal. Both GDP release and GTP hydrolysis are modulated by numerous regulatory proteins. Signaling involves the activation of adenylyl cyclases, resulting in increased levels of the signaling molecule cAMP. GNAS functions downstream of several GPCRs, including beta-adrenergic receptors. XLas isoforms interact with the same set of receptors as Gnas isoforms. The protein is Guanine nucleotide-binding protein G(s) subunit alpha isoforms XLas (GNAS) of Homo sapiens (Human).